Here is a 641-residue protein sequence, read N- to C-terminus: Macrolide export ATP-binding/permease protein MacB (641 aa).

The 239-residue stretch at 2-240 (IKLENIKKSF…LKQNLKEIKP (239 aa)) folds into the ABC transporter domain. Residue 38–45 (GQSGSGKS) participates in ATP binding. Transmembrane regions (helical) follow at residues 268 to 288 (FLTMLGIIIGIASVICVVALA), 516 to 536 (LLISGIALISLMVGGIGVMNI), 565 to 585 (FLIEAILLCAIGGSIGIGLAY), and 601 to 621 (IFSTASIFIALGVSSLIGIVF).

Belongs to the ABC transporter superfamily. Macrolide exporter (TC 3.A.1.122) family. In terms of assembly, homodimer.

It is found in the cell inner membrane. Functionally, non-canonical ABC transporter that contains transmembrane domains (TMD), which form a pore in the inner membrane, and an ATP-binding domain (NBD), which is responsible for energy generation. Confers resistance against macrolides. This is Macrolide export ATP-binding/permease protein MacB from Campylobacter fetus subsp. fetus (strain 82-40).